The primary structure comprises 445 residues: Xylose isomerase (445 aa).

Catalysis depends on residues H109 and D112. Residues E240, E276, H279, D304, D315, D317, and D347 each coordinate Mg(2+).

This sequence belongs to the xylose isomerase family. Homotetramer. Requires Mg(2+) as cofactor.

It localises to the cytoplasm. The enzyme catalyses alpha-D-xylose = alpha-D-xylulofuranose. The protein is Xylose isomerase of Xanthomonas oryzae pv. oryzae (strain MAFF 311018).